We begin with the raw amino-acid sequence, 436 residues long: 3-ketoacyl-CoA thiolase (436 aa).

Catalysis depends on Cys99, which acts as the Acyl-thioester intermediate. Catalysis depends on proton acceptor residues His392 and Cys422.

It belongs to the thiolase-like superfamily. Thiolase family. Heterotetramer of two alpha chains (FadJ) and two beta chains (FadI).

The protein localises to the cytoplasm. The catalysed reaction is an acyl-CoA + acetyl-CoA = a 3-oxoacyl-CoA + CoA. The protein operates within lipid metabolism; fatty acid beta-oxidation. Functionally, catalyzes the final step of fatty acid oxidation in which acetyl-CoA is released and the CoA ester of a fatty acid two carbons shorter is formed. The protein is 3-ketoacyl-CoA thiolase of Shewanella sp. (strain ANA-3).